The chain runs to 146 residues: Microsomal glutathione S-transferase 2 (146 aa).

The next 3 helical transmembrane spans lie at 6 to 26 (ILLA…AMQV), 59 to 79 (FYPI…QVFA), and 111 to 131 (SLGV…NSFL).

The protein belongs to the MAPEG family. Homotrimer.

The protein localises to the endoplasmic reticulum membrane. It is found in the microsome membrane. It catalyses the reaction RX + glutathione = an S-substituted glutathione + a halide anion + H(+). The enzyme catalyses 1-chloro-2,4-dinitrobenzene + glutathione = 2,4-dinitrophenyl-S-glutathione + chloride + H(+). The catalysed reaction is leukotriene C4 = leukotriene A4 + glutathione. It carries out the reaction (5S)-hydroperoxy-(6E,8Z,11Z,14Z)-eicosatetraenoate + 2 glutathione = (5S)-hydroxy-(6E,8Z,11Z,14Z)-eicosatetraenoate + glutathione disulfide + H2O. Its activity is regulated as follows. Each monomer binds on GSH molecule but only one subunit is catalytically active. Its function is as follows. Catalyzes several different glutathione-dependent reactions. Catalyzes the glutathione-dependent reduction of lipid hydroperoxides, such as 5-HPETE. Has glutathione transferase activity, toward xenobiotic electrophiles, such as 1-chloro-2, 4-dinitrobenzene (CDNB). Also catalyzes the conjugation of leukotriene A4 with reduced glutathione to form leukotriene C4 (LTC4). Involved in oxidative DNA damage induced by ER stress and anticancer agents by activating LTC4 biosynthetic machinery in nonimmune cells. The sequence is that of Microsomal glutathione S-transferase 2 (MGST2) from Bos taurus (Bovine).